The following is a 201-amino-acid chain: Large ribosomal subunit protein uL4 (201 aa).

The interval 44 to 71 is disordered; that stretch reads RAQKTRAEVSGSGKKPWRQKGTGRARSG.

It belongs to the universal ribosomal protein uL4 family. As to quaternary structure, part of the 50S ribosomal subunit.

One of the primary rRNA binding proteins, this protein initially binds near the 5'-end of the 23S rRNA. It is important during the early stages of 50S assembly. It makes multiple contacts with different domains of the 23S rRNA in the assembled 50S subunit and ribosome. Functionally, forms part of the polypeptide exit tunnel. The chain is Large ribosomal subunit protein uL4 from Photorhabdus laumondii subsp. laumondii (strain DSM 15139 / CIP 105565 / TT01) (Photorhabdus luminescens subsp. laumondii).